Reading from the N-terminus, the 89-residue chain is Small ribosomal subunit protein uS15c (89 aa).

It belongs to the universal ribosomal protein uS15 family. As to quaternary structure, part of the 30S ribosomal subunit.

The protein localises to the plastid. This chain is Small ribosomal subunit protein uS15c (rps15), found in Aneura mirabilis (Parasitic liverwort).